A 967-amino-acid chain; its full sequence is Translation initiation factor IF-2 (967 aa).

2 disordered regions span residues 201–320 (KPIV…PGFV) and 349–382 (LQGK…ELEA). Residues 233–248 (TGPTFSGQTIDLSQFN) show a composition bias toward polar residues. The span at 256–272 (PNKGGAKPAGAGNNNNN) shows a compositional bias: low complexity. Positions 354–363 (NKSKAAKYRR) are enriched in basic residues. Residues 364–382 (DKRDTHRQKSDDEQRELEA) are compositionally biased toward basic and acidic residues. Residues 465 to 635 (HRAPIVTVMG…LLEAEVLDLK (171 aa)) enclose the tr-type G domain. The G1 stretch occupies residues 474 to 481 (GHVDHGKT). A GTP-binding site is contributed by 474–481 (GHVDHGKT). Positions 499–503 (GITQH) are G2. The G3 stretch occupies residues 521 to 524 (DTPG). GTP contacts are provided by residues 521 to 525 (DTPGH) and 575 to 578 (NKVD). The G4 stretch occupies residues 575–578 (NKVD). Positions 611–613 (SAK) are G5.

This sequence belongs to the TRAFAC class translation factor GTPase superfamily. Classic translation factor GTPase family. IF-2 subfamily.

It localises to the cytoplasm. Functionally, one of the essential components for the initiation of protein synthesis. Protects formylmethionyl-tRNA from spontaneous hydrolysis and promotes its binding to the 30S ribosomal subunits. Also involved in the hydrolysis of GTP during the formation of the 70S ribosomal complex. The sequence is that of Translation initiation factor IF-2 from Flavobacterium psychrophilum (strain ATCC 49511 / DSM 21280 / CIP 103535 / JIP02/86).